A 228-amino-acid polypeptide reads, in one-letter code: Aquaporin Z (228 aa).

A run of 2 helical transmembrane segments spans residues 1–21 (MLNK…GGCG) and 23–43 (AILA…ALAF). Residues 63 to 65 (NPA) carry the NPA 1 motif. Transmembrane regions (helical) follow at residues 82–102 (IPYW…LYVI), 129–149 (MMAG…IILG), and 154–174 (LAPA…IHLV). Residues 184–186 (NPA) carry the NPA 2 motif. Residues 205–225 (LFWVAPLVGAVIGAIIWKGLL) form a helical membrane-spanning segment.

The protein belongs to the MIP/aquaporin (TC 1.A.8) family. Homotetramer.

Its subcellular location is the cell inner membrane. The catalysed reaction is H2O(in) = H2O(out). Channel that permits osmotically driven movement of water in both directions. It is involved in the osmoregulation and in the maintenance of cell turgor during volume expansion in rapidly growing cells. It mediates rapid entry or exit of water in response to abrupt changes in osmolarity. The protein is Aquaporin Z of Brucella melitensis biotype 1 (strain ATCC 23456 / CCUG 17765 / NCTC 10094 / 16M).